The chain runs to 271 residues: Formamidopyrimidine-DNA glycosylase (271 aa).

Proline 2 serves as the catalytic Schiff-base intermediate with DNA. The active-site Proton donor is glutamate 3. Residue lysine 58 is the Proton donor; for beta-elimination activity of the active site. DNA is bound by residues histidine 91, arginine 110, and arginine 152. The FPG-type zinc finger occupies 237 to 271 (WVYGRTGQPCRKCGALVSKTRQGQRSSFFCAQCQK). Arginine 261 (proton donor; for delta-elimination activity) is an active-site residue.

The protein belongs to the FPG family. In terms of assembly, monomer. Zn(2+) serves as cofactor.

It catalyses the reaction Hydrolysis of DNA containing ring-opened 7-methylguanine residues, releasing 2,6-diamino-4-hydroxy-5-(N-methyl)formamidopyrimidine.. The enzyme catalyses 2'-deoxyribonucleotide-(2'-deoxyribose 5'-phosphate)-2'-deoxyribonucleotide-DNA = a 3'-end 2'-deoxyribonucleotide-(2,3-dehydro-2,3-deoxyribose 5'-phosphate)-DNA + a 5'-end 5'-phospho-2'-deoxyribonucleoside-DNA + H(+). Involved in base excision repair of DNA damaged by oxidation or by mutagenic agents. Acts as a DNA glycosylase that recognizes and removes damaged bases. Has a preference for oxidized purines, such as 7,8-dihydro-8-oxoguanine (8-oxoG). Has AP (apurinic/apyrimidinic) lyase activity and introduces nicks in the DNA strand. Cleaves the DNA backbone by beta-delta elimination to generate a single-strand break at the site of the removed base with both 3'- and 5'-phosphates. This Nitrosomonas eutropha (strain DSM 101675 / C91 / Nm57) protein is Formamidopyrimidine-DNA glycosylase.